Here is a 238-residue protein sequence, read N- to C-terminus: ATP synthase subunit a (238 aa).

The next 5 membrane-spanning stretches (helical) occupy residues 17–37, 75–95, 112–132, 172–192, and 194–214; these read LSNI…AIIC, FHVL…LGLP, DPIV…YYGI, YGNI…LAHI, and IFVG…SLFI.

This sequence belongs to the ATPase A chain family. F-type ATPases have 2 components, CF(1) - the catalytic core - and CF(0) - the membrane proton channel. CF(1) has five subunits: alpha(3), beta(3), gamma(1), delta(1), epsilon(1). CF(0) has three main subunits: a(1), b(2) and c(9-12). The alpha and beta chains form an alternating ring which encloses part of the gamma chain. CF(1) is attached to CF(0) by a central stalk formed by the gamma and epsilon chains, while a peripheral stalk is formed by the delta and b chains.

The protein resides in the cell membrane. Key component of the proton channel; it plays a direct role in the translocation of protons across the membrane. This chain is ATP synthase subunit a, found in Listeria monocytogenes serovar 1/2a (strain ATCC BAA-679 / EGD-e).